The following is a 472-amino-acid chain: UDP-N-acetylmuramate--L-alanine ligase (472 aa).

Position 121 to 127 (121 to 127) interacts with ATP; it reads GTHGKTT.

It belongs to the MurCDEF family.

The protein localises to the cytoplasm. The enzyme catalyses UDP-N-acetyl-alpha-D-muramate + L-alanine + ATP = UDP-N-acetyl-alpha-D-muramoyl-L-alanine + ADP + phosphate + H(+). It participates in cell wall biogenesis; peptidoglycan biosynthesis. Its function is as follows. Cell wall formation. The sequence is that of UDP-N-acetylmuramate--L-alanine ligase from Hahella chejuensis (strain KCTC 2396).